The primary structure comprises 198 residues: Elongation factor Ts (198 aa).

Residues 81-84 are involved in Mg(2+) ion dislocation from EF-Tu; sequence TDFV.

Belongs to the EF-Ts family.

The protein localises to the cytoplasm. Associates with the EF-Tu.GDP complex and induces the exchange of GDP to GTP. It remains bound to the aminoacyl-tRNA.EF-Tu.GTP complex up to the GTP hydrolysis stage on the ribosome. The protein is Elongation factor Ts of Dictyoglomus turgidum (strain DSM 6724 / Z-1310).